The following is an 88-amino-acid chain: Apolipoprotein C-I (88 aa).

Residues methionine 1–alanine 26 form the signal peptide.

It belongs to the apolipoprotein C1 family.

The protein localises to the secreted. Its function is as follows. Inhibitor of lipoprotein binding to the low density lipoprotein (LDL) receptor, LDL receptor-related protein, and very low density lipoprotein (VLDL) receptor. Associates with high density lipoproteins (HDL) and the triacylglycerol-rich lipoproteins in the plasma and makes up about 10% of the protein of the VLDL and 2% of that of HDL. Appears to interfere directly with fatty acid uptake and is also the major plasma inhibitor of cholesteryl ester transfer protein (CETP). Modulates the interaction of APOE with beta-migrating VLDL and inhibits binding of beta-VLDL to the LDL receptor-related protein. Binds free fatty acids and reduces their intracellular esterification. This chain is Apolipoprotein C-I (Apoc1), found in Neotoma lepida (Desert woodrat).